The following is a 378-amino-acid chain: Anhydro-N-acetylmuramic acid kinase (378 aa).

Position 22–29 (22–29 (GTSLDGAD)) interacts with ATP.

This sequence belongs to the anhydro-N-acetylmuramic acid kinase family.

The catalysed reaction is 1,6-anhydro-N-acetyl-beta-muramate + ATP + H2O = N-acetyl-D-muramate 6-phosphate + ADP + H(+). The protein operates within amino-sugar metabolism; 1,6-anhydro-N-acetylmuramate degradation. It functions in the pathway cell wall biogenesis; peptidoglycan recycling. Functionally, catalyzes the specific phosphorylation of 1,6-anhydro-N-acetylmuramic acid (anhMurNAc) with the simultaneous cleavage of the 1,6-anhydro ring, generating MurNAc-6-P. Is required for the utilization of anhMurNAc either imported from the medium or derived from its own cell wall murein, and thus plays a role in cell wall recycling. The sequence is that of Anhydro-N-acetylmuramic acid kinase from Bordetella petrii (strain ATCC BAA-461 / DSM 12804 / CCUG 43448).